A 509-amino-acid polypeptide reads, in one-letter code: Maturase K (509 aa).

The protein belongs to the intron maturase 2 family. MatK subfamily.

The protein localises to the plastid. It localises to the chloroplast. Functionally, usually encoded in the trnK tRNA gene intron. Probably assists in splicing its own and other chloroplast group II introns. This Nicotiana sylvestris (Wood tobacco) protein is Maturase K.